Reading from the N-terminus, the 296-residue chain is Ribosomal protein L11 methyltransferase (296 aa).

T151, G172, D194, and N233 together coordinate S-adenosyl-L-methionine.

The protein belongs to the methyltransferase superfamily. PrmA family.

It localises to the cytoplasm. It catalyses the reaction L-lysyl-[protein] + 3 S-adenosyl-L-methionine = N(6),N(6),N(6)-trimethyl-L-lysyl-[protein] + 3 S-adenosyl-L-homocysteine + 3 H(+). Its function is as follows. Methylates ribosomal protein L11. This Thiobacillus denitrificans (strain ATCC 25259 / T1) protein is Ribosomal protein L11 methyltransferase.